The sequence spans 244 residues: Transcription factor A, mitochondrial (244 aa).

The transit peptide at 1–42 (MALFRGMWGVLRTLGRTGVEMCAGCGGRIPSPVSLICIPKCF) directs the protein to the mitochondrion. A DNA-binding region (HMG box 1) is located at residues 49 to 117 (PKKPMSSYLR…VYKEAVSKYK (69 aa)). Phosphoserine; by PKA occurs at positions 54, 55, and 60. Lys-66 is modified (N6-succinyllysine). The residue at position 121 (Thr-121) is a Phosphothreonine. A DNA-binding region (HMG box 2) is located at residues 154-218 (PKRPRSAYNI…RYDNEMKSWE (65 aa)). Ser-159 is modified (phosphoserine; by PKA). Ser-192 bears the Phosphoserine mark. Positions 221-244 (MAEVGRSDLIRRSVKRPPGDISEN) are disordered.

In terms of assembly, monomer; binds DNA as a monomer. Homodimer. Component of the mitochondrial transcription initiation complex, composed at least of TFB2M, TFAM and POLRMT. In this complex TFAM recruits POLRMT to the promoter whereas TFB2M induces structural changes in POLRMT to enable promoter opening and trapping of the DNA non-template strand. Upon metabolic stress, forms a complex composed of FOXO3, SIRT3, TFAM and POLRMT. Interacts with TFB1M and TFB2M. Interacts with CLPX; this enhances DNA-binding. In terms of processing, phosphorylation by PKA within the HMG box 1 impairs DNA binding and promotes degradation by the AAA+ Lon protease. The mitochondrial isoform is widely expressed while the nuclear isoform is testis-specific.

The protein resides in the mitochondrion. It is found in the mitochondrion matrix. Its subcellular location is the mitochondrion nucleoid. It localises to the nucleus. Functionally, binds to the mitochondrial light strand promoter and functions in mitochondrial transcription regulation. Component of the mitochondrial transcription initiation complex, composed at least of TFB2M, TFAM and POLRMT that is required for basal transcription of mitochondrial DNA. In this complex, TFAM recruits POLRMT to a specific promoter whereas TFB2M induces structural changes in POLRMT to enable promoter opening and trapping of the DNA non-template strand. Required for accurate and efficient promoter recognition by the mitochondrial RNA polymerase. Promotes transcription initiation from the HSP1 and the light strand promoter by binding immediately upstream of transcriptional start sites. Is able to unwind DNA. Bends the mitochondrial light strand promoter DNA into a U-turn shape via its HMG boxes. Required for maintenance of normal levels of mitochondrial DNA. May play a role in organizing and compacting mitochondrial DNA. Its function is as follows. May also function as a transcriptional activator or may have a structural role in the compaction of nuclear DNA during spermatogenesis. This is Transcription factor A, mitochondrial from Rattus norvegicus (Rat).